Here is a 100-residue protein sequence, read N- to C-terminus: Urease subunit gamma (100 aa).

This sequence belongs to the urease gamma subunit family. Heterotrimer of UreA (gamma), UreB (beta) and UreC (alpha) subunits. Three heterotrimers associate to form the active enzyme.

It is found in the cytoplasm. It carries out the reaction urea + 2 H2O + H(+) = hydrogencarbonate + 2 NH4(+). The protein operates within nitrogen metabolism; urea degradation; CO(2) and NH(3) from urea (urease route): step 1/1. This Mycolicibacterium smegmatis (strain ATCC 700084 / mc(2)155) (Mycobacterium smegmatis) protein is Urease subunit gamma.